A 299-amino-acid polypeptide reads, in one-letter code: MLFQRRLHFHQFFGKTRVTGSLSRQWYSKLPSKLADIKKLRSETNASMDLVKQSVEEAGVGNLELAREILKKKIVQRGGKLAEKSKNRTAKEGWIIQCISEDGRKAVMAEINCESDFVAQTTPFQDLARRIASTFLHYLPTNHSSYSVEATLKNEILKHQAYVSKNHEANEKDVSSNVSLEEEIVKMTSFTGEKVQVQRLHCMNARVPSTAIGIFSHGAKQSSPLQQLGRIGSMVQINSDLSTRKGLSNQIAKEIVAQDPSSTSELLSFRSLVDSEKTIKDVLGQSTILEWVRWERGGN.

The transit peptide at 1 to 18 directs the protein to the mitochondrion; it reads MLFQRRLHFHQFFGKTRV.

It belongs to the EF-Ts family.

It localises to the mitochondrion. Associates with the EF-Tu.GDP complex and induces the exchange of GDP to GTP. It remains bound to the aminoacyl-tRNA.EF-Tu.GTP complex up to the GTP hydrolysis stage on the ribosome. The polypeptide is Elongation factor Ts, mitochondrial (tsf1) (Schizosaccharomyces pombe (strain 972 / ATCC 24843) (Fission yeast)).